A 112-amino-acid chain; its full sequence is cAMP-regulated phosphoprotein 19 (112 aa).

Met-1 carries the N-acetylmethionine modification. The segment covering 1 to 11 has biased composition (low complexity); the sequence is MSAEVPEAASA. The interval 1-49 is disordered; sequence MSAEVPEAASAEEQKEMEDKVTSPEKAEEAKLKARYPHLGQKPGGSDFL. Ser-2 carries the post-translational modification N-acetylserine. Phosphoserine occurs at positions 2 and 23. Positions 12 to 32 are enriched in basic and acidic residues; that stretch reads EEQKEMEDKVTSPEKAEEAKL. 2 positions are modified to phosphoserine; by GWL: Ser-62 and Ser-104. The disordered stretch occupies residues 72-112; that stretch reads MKNKQLPTATPDKTEVTGDHIPTPQDLPQRKPSLVASKLAG. Position 104 is a phosphoserine; by PKA (Ser-104). At Lys-109 the chain carries N6-acetyllysine.

As to quaternary structure, interacts (when phosphorylated at Ser-62) with PPP2R2D. Interacts with SNCA. Interacts with PPP2R2A; the interaction is direct and this interaction inhibits PP2A activity. In terms of processing, phosphorylation at Ser-62 by MASTL/GWL during mitosis is essential for interaction with PPP2R2D (PR55-delta) and subsequent inactivation of PP2A. Phosphorylated by PKA. Isoform ARPP-19 is found in all brain regions and also present in non-neuronal tissues. Isoform ARPP-16 is enriched in the caudate nucleus, found in low levels in cerebral cortex.

It is found in the cytoplasm. Protein phosphatase inhibitor that specifically inhibits protein phosphatase 2A (PP2A) during mitosis. Inhibition of PP2A is enhanced when ARPP19 is phosphorylated. When phosphorylated at Ser-62 during mitosis, specifically interacts with PPP2R2D (PR55-delta) and inhibits its activity, leading to inactivation of PP2A, an essential condition to keep cyclin-B1-CDK1 activity high during M phase. May indirectly enhance GAP-43 expression. The polypeptide is cAMP-regulated phosphoprotein 19 (ARPP19) (Bos taurus (Bovine)).